Consider the following 323-residue polypeptide: Probable cell division protein WhiA (323 aa).

The H-T-H motif DNA-binding region spans 275-309 (TLKELGEMLTTGQVSKSGINHRLRKLDQIAERLRS).

This sequence belongs to the WhiA family.

Functionally, involved in cell division and chromosome segregation. This is Probable cell division protein WhiA from Listeria innocua serovar 6a (strain ATCC BAA-680 / CLIP 11262).